A 181-amino-acid polypeptide reads, in one-letter code: NADH-quinone oxidoreductase subunit I (181 aa).

4Fe-4S ferredoxin-type domains lie at 52-81 and 91-120; these read TRDS…LKKS and EFFR…LISD. [4Fe-4S] cluster contacts are provided by Cys-61, Cys-64, Cys-67, Cys-71, Cys-100, Cys-103, Cys-106, and Cys-110.

This sequence belongs to the complex I 23 kDa subunit family. As to quaternary structure, NDH-1 is composed of 13 different subunits. Subunits NuoA, H, J, K, L, M, N constitute the membrane sector of the complex. [4Fe-4S] cluster is required as a cofactor.

The protein resides in the cell inner membrane. The catalysed reaction is a quinone + NADH + 5 H(+)(in) = a quinol + NAD(+) + 4 H(+)(out). Functionally, NDH-1 shuttles electrons from NADH, via FMN and iron-sulfur (Fe-S) centers, to quinones in the respiratory chain. The immediate electron acceptor for the enzyme in this species is believed to be ubiquinone. Couples the redox reaction to proton translocation (for every two electrons transferred, four hydrogen ions are translocated across the cytoplasmic membrane), and thus conserves the redox energy in a proton gradient. The polypeptide is NADH-quinone oxidoreductase subunit I (Blochmanniella floridana).